A 149-amino-acid chain; its full sequence is Probable microsomal glutathione S-transferase (149 aa).

Transmembrane regions (helical) follow at residues 7-27 and 123-143; these read SIFP…IGLW and LSHI…GSSL.

Belongs to the MAPEG family.

The protein localises to the membrane. It carries out the reaction RX + glutathione = an S-substituted glutathione + a halide anion + H(+). May perform the conjugation of reduced glutathione to electrophiles. The sequence is that of Probable microsomal glutathione S-transferase (mgst) from Dictyostelium discoideum (Social amoeba).